The primary structure comprises 130 residues: Small ribosomal subunit protein uS8 (130 aa).

Belongs to the universal ribosomal protein uS8 family. In terms of assembly, part of the 30S ribosomal subunit.

One of the primary rRNA binding proteins, it binds directly to 16S rRNA central domain where it helps coordinate assembly of the platform of the 30S subunit. The chain is Small ribosomal subunit protein uS8 from Nitrosopumilus maritimus (strain SCM1).